Here is a 317-residue protein sequence, read N- to C-terminus: 2,3-dihydroxyphenylpropionate/2,3-dihydroxicinnamic acid 1,2-dioxygenase (317 aa).

H115 functions as the Proton donor in the catalytic mechanism. H179 functions as the Proton acceptor in the catalytic mechanism.

This sequence belongs to the LigB/MhpB extradiol dioxygenase family. As to quaternary structure, homotetramer. Fe(2+) serves as cofactor.

It catalyses the reaction 3-(2,3-dihydroxyphenyl)propanoate + O2 = (2Z,4E)-2-hydroxy-6-oxonona-2,4-dienedioate + H(+). The catalysed reaction is (2E)-3-(2,3-dihydroxyphenyl)prop-2-enoate + O2 = (2Z,4E,7E)-2-hydroxy-6-oxonona-2,4,7-trienedioate + H(+). Its pathway is aromatic compound metabolism; 3-phenylpropanoate degradation. Functionally, catalyzes the non-heme iron(II)-dependent oxidative cleavage of 2,3-dihydroxyphenylpropionic acid and 2,3-dihydroxicinnamic acid into 2-hydroxy-6-ketononadienedioate and 2-hydroxy-6-ketononatrienedioate, respectively. In Photorhabdus laumondii subsp. laumondii (strain DSM 15139 / CIP 105565 / TT01) (Photorhabdus luminescens subsp. laumondii), this protein is 2,3-dihydroxyphenylpropionate/2,3-dihydroxicinnamic acid 1,2-dioxygenase.